A 146-amino-acid polypeptide reads, in one-letter code: Hemoglobin subunit beta (146 aa).

At V1 the chain carries N-acetylvaline. A Globin domain is found at 2–146; that stretch reads HLTADEKAAV…VATALAHKYH (145 aa). T12 is modified (phosphothreonine). The residue at position 44 (S44) is a Phosphoserine. N6-acetyllysine is present on K59. H63 contributes to the heme b binding site. The residue at position 82 (K82) is an N6-acetyllysine. Residue H92 coordinates heme b. Position 93 is an S-nitrosocysteine (C93). At K144 the chain carries N6-acetyllysine.

It belongs to the globin family. Heterotetramer of two alpha chains and two beta chains. As to expression, red blood cells.

Involved in oxygen transport from the lung to the various peripheral tissues. In Taphozous georgianus (Sharp-nosed tomb bat), this protein is Hemoglobin subunit beta (HBB).